Here is a 400-residue protein sequence, read N- to C-terminus: 2-octaprenylphenol hydroxylase (400 aa).

Residues 49–52 and 297–303 each bind FAD; these read RVSA and LAGQGVN.

This sequence belongs to the UbiH/COQ6 family. As to quaternary structure, homotetramer. Component of the Ubi complex metabolon, which regroups five ubiquinone biosynthesis proteins (UbiE, UbiF, UbiG, UbiH and UbiI) and two accessory factors (UbiK and the lipid-binding protein UbiJ). FAD is required as a cofactor.

The protein localises to the cytoplasm. The catalysed reaction is 2-all-trans-octaprenylphenol + NADPH + O2 + H(+) = 3-(all-trans-octaprenyl)benzene-1,2-diol + NADP(+) + H2O. The enzyme catalyses a 2-(all-trans-polyprenyl)phenol + NADPH + O2 + H(+) = a 3-(all-trans-polyprenyl)benzene-1,2-diol + NADP(+) + H2O. It participates in cofactor biosynthesis; ubiquinone biosynthesis. FAD-dependent monooxygenase required for the aerobic hydroxylation of 2-octaprenylphenol to 2-octaprenyl-6-hydroxy-phenol, the first hydroxylation step in coenzyme Q (ubiquinone) biosynthesis. The protein is 2-octaprenylphenol hydroxylase of Escherichia coli (strain K12).